The following is a 470-amino-acid chain: MAKARAPRRKRASATQLYQTCKASGTCPSDVIPKVEGTTIADQILRWGSMGVFFGGLGIGTGSGTGGRTGYIPLGRPSTTLEPGPPVRPAGAVETVAPSDPSIVSLVEESSVVDVGAPTPTIPSQGGFEIATSSDATPAILDVTSTTTPIRVSITSHDNPIYTEPSLLDPPPPVQMDGRVLVSTSTLQSSTAENIPMDTFIIMQDHIGTTTSTPIPRPPARPRLGLYSRALQQVPVQDPAFLQQPSSLITYDNPVYEGNPDVTLHFEQPTIHNAPDPAFMDIFALHRPALTTRRGVVRYSRVGDRATLHTRSGLQLKPRVHFFQDLSPIAHVPEEIELHPLISANNTSINNGLYSDIYDVYADTDFADTGGFSSSTVSHSSVQTALQTTSIPSQYGNTTVPLTASSPYTPIPTSFRPSSGHTPFVPARPIFPQTPIAVNGGDFYLHPSYTYVRKRRKRFPYFLADGYVAA.

A Nuclear localization signal motif is present at residues 1–12; that stretch reads MAKARAPRRKRA. Cysteine 21 and cysteine 27 are joined by a disulfide. The Nuclear localization signal signature appears at 451–459; sequence YVRKRRKRF.

Belongs to the papillomaviridae L2 protein family. As to quaternary structure, interacts with major capsid protein L1. Interacts with E2; this interaction inhibits E2 transcriptional activity but not the DNA replication function E2. Interacts with host GADD45GIP1. Interacts with host HSPA8; this interaction is required for L2 nuclear translocation. Interacts with host importins KPNB2 and KPNB3. Forms a complex with importin alpha2-beta1 heterodimers via interaction with the importin alpha2 adapter. Interacts with host DYNLT1; this interaction is essential for virus intracellular transport during entry. Interacts (via C-terminus) with host retromer subunits VPS35 and VPS29. Highly phosphorylated.

It is found in the virion. It localises to the host nucleus. Its subcellular location is the host early endosome. The protein localises to the host Golgi apparatus. Its function is as follows. Minor protein of the capsid that localizes along the inner surface of the virion, within the central cavities beneath the L1 pentamers. Plays a role in capsid stabilization through interaction with the major capsid protein L1. Once the virion enters the host cell, L2 escorts the genomic DNA into the nucleus by promoting escape from the endosomal compartments and traffic through the host Golgi network. Mechanistically, the C-terminus of L2 possesses a cell-penetrating peptide that protudes from the host endosome, interacts with host cytoplasmic retromer cargo and thereby mediates the capsid delivery to the host trans-Golgi network. Plays a role through its interaction with host dynein in the intracellular microtubule-dependent transport of viral capsid toward the nucleus. Mediates the viral genome import into the nucleus through binding to host importins. Once within the nucleus, L2 localizes viral genomes to host PML bodies in order to activate early gene expression for establishment of infection. Later on, promotes late gene expression by interacting with the viral E2 protein and by inhibiting its transcriptional activation functions. During virion assembly, encapsidates the genome by direct interaction with the viral DNA. This chain is Minor capsid protein L2, found in Human papillomavirus type 54.